We begin with the raw amino-acid sequence, 507 residues long: Protein MosB (507 aa).

Residues 256 to 275 (QAHGALYKGQHVGLLSDIGC) constitute a DNA-binding region (H-T-H motif). An N6-(pyridoxal phosphate)lysine modification is found at Lys282.

It belongs to the DegT/DnrJ/EryC1 family.

Functionally, involved in the biosynthesis of the rhizopine 3-O-methyl-scyllo-inosamine. May have a regulatory role in controlling the housekeeping genes within the nodule which are involved in the biosynthesis of the rhizopine backbone. The protein is Protein MosB (mosB) of Rhizobium meliloti (Ensifer meliloti).